Consider the following 930-residue polypeptide: Pyruvate dehydrogenase E1 component (930 aa).

Residues 1 to 10 (MTTDFARHDL) show a composition bias toward basic and acidic residues. Residues 1-21 (MTTDFARHDLAQNSNSASEPD) form a disordered region. An Isoglutamyl lysine isopeptide (Lys-Gln) (interchain with Q-Cter in protein Pup) cross-link involves residue lysine 375.

In terms of assembly, homodimer. Part of the PDH complex, consisting of multiple copies of AceE (E1), DlaT (E2) and Lpd (E3). Requires Mg(2+) as cofactor. It depends on thiamine diphosphate as a cofactor.

The enzyme catalyses N(6)-[(R)-lipoyl]-L-lysyl-[protein] + pyruvate + H(+) = N(6)-[(R)-S(8)-acetyldihydrolipoyl]-L-lysyl-[protein] + CO2. In terms of biological role, component of the pyruvate dehydrogenase (PDH) complex, that catalyzes the overall conversion of pyruvate to acetyl-CoA and CO(2). AceE has reductase activity with pyruvate but does not react with 2-oxoglutarate. This chain is Pyruvate dehydrogenase E1 component (aceE), found in Mycobacterium tuberculosis (strain ATCC 25618 / H37Rv).